We begin with the raw amino-acid sequence, 180 residues long: Required for excision 1-B domain-containing protein (180 aa).

The segment at 1–23 (MITAEAASESTVPAVPGDTAATG) is disordered.

This Bos taurus (Bovine) protein is Required for excision 1-B domain-containing protein.